The primary structure comprises 187 residues: uncharacterized protein (187 aa).

A disordered region spans residues 131–187; the sequence is VAEKKDQRKKKPKVKTQGENAPVAKSAGENSGKLEEQKDERKGIAKDIDDFFGGIDG. Basic and acidic residues predominate over residues 162–179; it reads GKLEEQKDERKGIAKDID.

This is an uncharacterized protein from Haemophilus influenzae (Bacteriophage HP1).